The following is a 352-amino-acid chain: Photosystem II D2 protein (352 aa).

Residues C40–T60 form a helical membrane-spanning segment. Residue H117 participates in chlorophyll a binding. Residues G124 to P140 traverse the membrane as a helical segment. Residues Q129 and N142 each coordinate pheophytin a. The helical transmembrane segment at V152–S165 threads the bilayer. H197 lines the chlorophyll a pocket. A helical membrane pass occupies residues G207–D227. A plastoquinone contacts are provided by H214 and F261. H214 lines the Fe cation pocket. H268 serves as a coordination point for Fe cation. A helical transmembrane segment spans residues G278–R294.

Belongs to the reaction center PufL/M/PsbA/D family. PSII is composed of 1 copy each of membrane proteins PsbA, PsbB, PsbC, PsbD, PsbE, PsbF, PsbH, PsbI, PsbJ, PsbK, PsbL, PsbM, PsbT, PsbX, PsbY, PsbZ, Psb30/Ycf12, peripheral proteins PsbO, CyanoQ (PsbQ), PsbU, PsbV and a large number of cofactors. It forms dimeric complexes. The cofactor is The D1/D2 heterodimer binds P680, chlorophylls that are the primary electron donor of PSII, and subsequent electron acceptors. It shares a non-heme iron and each subunit binds pheophytin, quinone, additional chlorophylls, carotenoids and lipids. There is also a Cl(-1) ion associated with D1 and D2, which is required for oxygen evolution. The PSII complex binds additional chlorophylls, carotenoids and specific lipids..

It localises to the cellular thylakoid membrane. It carries out the reaction 2 a plastoquinone + 4 hnu + 2 H2O = 2 a plastoquinol + O2. In terms of biological role, photosystem II (PSII) is a light-driven water:plastoquinone oxidoreductase that uses light energy to abstract electrons from H(2)O, generating O(2) and a proton gradient subsequently used for ATP formation. It consists of a core antenna complex that captures photons, and an electron transfer chain that converts photonic excitation into a charge separation. The D1/D2 (PsbA/PsbD) reaction center heterodimer binds P680, the primary electron donor of PSII as well as several subsequent electron acceptors. D2 is needed for assembly of a stable PSII complex. In Synechococcus sp. (strain RCC307), this protein is Photosystem II D2 protein.